We begin with the raw amino-acid sequence, 523 residues long: ATP synthase subunit alpha (523 aa).

ATP is bound at residue 179–186; the sequence is GDRQTGKT.

It belongs to the ATPase alpha/beta chains family. As to quaternary structure, F-type ATPases have 2 components, CF(1) - the catalytic core - and CF(0) - the membrane proton channel. CF(1) has five subunits: alpha(3), beta(3), gamma(1), delta(1), epsilon(1). CF(0) has three main subunits: a(1), b(2) and c(9-12). The alpha and beta chains form an alternating ring which encloses part of the gamma chain. CF(1) is attached to CF(0) by a central stalk formed by the gamma and epsilon chains, while a peripheral stalk is formed by the delta and b chains.

The protein resides in the cell inner membrane. The catalysed reaction is ATP + H2O + 4 H(+)(in) = ADP + phosphate + 5 H(+)(out). In terms of biological role, produces ATP from ADP in the presence of a proton gradient across the membrane. The alpha chain is a regulatory subunit. This Vibrio vulnificus (strain YJ016) protein is ATP synthase subunit alpha.